We begin with the raw amino-acid sequence, 108 residues long: UPF0060 membrane protein Mvan_3406 (108 aa).

Helical transmembrane passes span 7–27, 32–52, 61–81, and 87–107; these read LLFV…WQGV, GLTW…VAAF, VLAA…VVAD, and RWDI…MYAP.

It belongs to the UPF0060 family.

It is found in the cell membrane. This chain is UPF0060 membrane protein Mvan_3406, found in Mycolicibacterium vanbaalenii (strain DSM 7251 / JCM 13017 / BCRC 16820 / KCTC 9966 / NRRL B-24157 / PYR-1) (Mycobacterium vanbaalenii).